The following is a 663-amino-acid chain: uncharacterized protein (663 aa).

An N-terminal signal peptide occupies residues 1–29 (MLDIGVIGRLKFATAFMAMSLLLVPAAEA).

Belongs to the bacterial solute-binding protein 5 family.

Its subcellular location is the periplasm. Possible binding-protein with either a transport or enzymatic activity. This is an uncharacterized protein from Sinorhizobium fredii (strain NBRC 101917 / NGR234).